We begin with the raw amino-acid sequence, 348 residues long: MSTENGKSADAPVAAPAAKELTSKDYYFDSYAHFGIHEEMLKDEVRTTTYRNSIYHNSHLFKDKVVMDVGSGTGILSMFAAKAGAKKVFAMEFSNMALTSRKIIADNNLDHIVEVIQAKVEDVHELPGGIEKVDIIISEWMGYCLFYESMLNTVLVARDRWLAPNGMLFPDKARLYVCAIEDRQYKEDKIHWWDSVYGFNMSAIKNVAIKEPLVDIVDNAQVNTNNCLLKDVDLYTVKIEDLTFKSDFKLRCTRSDYIQAFVTFFTVEFSKCHKKTGFSTGPDVQYTHWKQTVFYLKDALTVKKGEEITGSFEMAPNKNNERDLDINISFDFKGEVCDLNEQNTYTMH.

The SAM-dependent MTase PRMT-type domain maps to 24 to 342; that stretch reads KDYYFDSYAH…KGEVCDLNEQ (319 aa). The S-adenosyl-L-methionine site is built by histidine 37, arginine 46, glycine 70, glutamate 92, and glutamate 121. Active-site residues include glutamate 139 and glutamate 148.

It belongs to the class I-like SAM-binding methyltransferase superfamily. Protein arginine N-methyltransferase family. As to quaternary structure, interacts with daf-16. Interacts with pgl-1 and pgl-3. Interacts with alg-1. In terms of tissue distribution, widely expressed in pharyngeal, body wall muscle, intestinal and vulval cells.

It is found in the cytoplasm. The protein resides in the nucleus. It carries out the reaction L-arginyl-[protein] + 2 S-adenosyl-L-methionine = N(omega),N(omega)-dimethyl-L-arginyl-[protein] + 2 S-adenosyl-L-homocysteine + 2 H(+). The catalysed reaction is L-arginyl-[protein] + S-adenosyl-L-methionine = N(omega)-methyl-L-arginyl-[protein] + S-adenosyl-L-homocysteine + H(+). Arginine methyltransferase that methylates (mono and asymmetric dimethylation) the guanidino nitrogens of arginyl residues present in target proteins. Catalyzes the formation of monomethylarginine and asymmetric dimethylarginine on histones H2A and H4, a specific tag for epigenetic transcriptional activation. Catalyzes asymmetric arginine dimethylation of mitochondrial proteins necessary for mitochondrial oxidative phosphorylation activity and thus aerobic respiration and ATP synthesis, and the mitochondrial stress response. Methylates arginine residues in P-granule components pgl-1 and pgl-3 to promote P-granule degradation by autophagy in somatic cells to ensure exclusive localization of the P-granules in germ cells. Modulates the interaction of P-granule proteins epg-2 and sepa-1. Methylates arginine residues in daf-16, which blocks ftt-2 binding to daf-16, prevents akt-mediated phosphorylation and allows for daf-16 to translocate to the nucleus. In turn, association with daf-16 therefore allows for the transcriptional activation of daf-16 and regulation of longevity-related genes. Maintains lifespan by modulating daf-16 activity downstream of the daf-2 signaling pathway. Plays a role in heat and oxidative stress resistance. Role in stress resistance and also fat storage may be in association with the daf-2 signaling pathway. Required for normal feeding behavior. The protein is Protein arginine N-methyltransferase 1 of Caenorhabditis elegans.